The sequence spans 420 residues: Exodeoxyribonuclease 7 large subunit (420 aa).

It belongs to the XseA family. In terms of assembly, heterooligomer composed of large and small subunits.

The protein resides in the cytoplasm. It catalyses the reaction Exonucleolytic cleavage in either 5'- to 3'- or 3'- to 5'-direction to yield nucleoside 5'-phosphates.. Functionally, bidirectionally degrades single-stranded DNA into large acid-insoluble oligonucleotides, which are then degraded further into small acid-soluble oligonucleotides. This Helicobacter pylori (strain G27) protein is Exodeoxyribonuclease 7 large subunit.